A 170-amino-acid chain; its full sequence is Large ribosomal subunit protein uL5 (170 aa).

Belongs to the universal ribosomal protein uL5 family. In terms of assembly, part of the 50S ribosomal subunit; contacts the 5S rRNA and probably tRNA. Forms a bridge to the 30S subunit in the 70S ribosome.

In terms of biological role, this is one of the proteins that bind and probably mediate the attachment of the 5S RNA into the large ribosomal subunit, where it forms part of the central protuberance. In the 70S ribosome it contacts protein S13 of the 30S subunit (bridge B1b), connecting the 2 subunits; this bridge is implicated in subunit movement. May contact the P site tRNA; the 5S rRNA and some of its associated proteins might help stabilize positioning of ribosome-bound tRNAs. The chain is Large ribosomal subunit protein uL5 from Thermoplasma volcanium (strain ATCC 51530 / DSM 4299 / JCM 9571 / NBRC 15438 / GSS1).